We begin with the raw amino-acid sequence, 1273 residues long: Receptor-type tyrosine-protein phosphatase C (1273 aa).

The first 23 residues, 1 to 23, serve as a signal peptide directing secretion; that stretch reads MYLWLKLLAFSLALLGPEVFVTG. Over 24–546 the chain is Extracellular; the sequence is QGTTDDGLDT…KPQSTSYNSK (523 aa). The interval 45 to 192 is disordered; the sequence is LPARTTEFTP…TEIATPQTKP (148 aa). 3 stretches are compositionally biased toward polar residues: residues 50 to 77, 84 to 111, and 141 to 192; these read TEFTPPSISERGNGSSETTYLPGFSSTL, QPDSQTPSARGADTQTLSSQADLTTLTA, and RNST…QTKP. Residue N62 is glycosylated (N-linked (GlcNAc...) asparagine). Residues N142, N153, N164, N178, N200, N245, N250, N271, N282, N327, N333, N371, N374, N471, and N502 are each glycosylated (N-linked (GlcNAc...) asparagine). Fibronectin type-III domains are found at residues 361 to 452 and 453 to 545; these read PEML…TKAA and RPGK…SYNS. Residues 547–567 traverse the membrane as a helical segment; it reads ALIIFLVFLIIVTSIALLVVL. At 568 to 1273 the chain is on the cytoplasmic side; sequence YKIYDLRKKR…PMSPALTPSS (706 aa). Tyrosine-protein phosphatase domains are found at residues 622-881 and 913-1196; these read FLAE…LVEY and LEAE…MASI. Y652 bears the Phosphotyrosine mark. Residues D790, 822–828, and Q866 each bind substrate; that span reads CSAGVGR. The active-site Phosphocysteine intermediate is C822. 7 positions are modified to phosphoserine: S944, S963, S966, S970, S973, S974, and S978. The disordered stretch occupies residues 960 to 984; it reads LEMSKESEAESDESSDEDSDSEETS. A compositionally biased stretch (acidic residues) spans 968-981; sequence AESDESSDEDSDSE. Residue C1137 is the Phosphocysteine intermediate of the active site. Residues S1209 and S1266 each carry the phosphoserine modification. The segment at 1219 to 1273 is disordered; the sequence is VDGAKQDANCVQPADPLNKAQEDSKEVGASEPASGSEEPEHSANGPMSPALTPSS.

The protein belongs to the protein-tyrosine phosphatase family. Receptor class 1/6 subfamily. As to quaternary structure, interacts with SKAP1. Interacts with DPP4; the interaction is enhanced in an interleukin-12-dependent manner in activated lymphocytes. Binds GANAB and PRKCSH. Interacts with CD53; this interaction stabilizes PTPRC on the membrane and is required for optimal phosphatase activity. Interacts with CLEC10A. Post-translationally, heavily N- and O-glycosylated. The cytoplasmic domain contains potential phosphorylation sites. Isoform 1 and isoform 2 are found in thymocyte and lymph node. Isoform 4 and isoform 3 are found in the lymph nod.

It is found in the cell membrane. Its subcellular location is the membrane raft. It localises to the synapse. It catalyses the reaction O-phospho-L-tyrosyl-[protein] + H2O = L-tyrosyl-[protein] + phosphate. Its function is as follows. Protein tyrosine-protein phosphatase required for T-cell activation through the antigen receptor. Acts as a positive regulator of T-cell coactivation upon binding to DPP4. The first PTPase domain has enzymatic activity, while the second one seems to affect the substrate specificity of the first one. Upon T-cell activation, recruits and dephosphorylates SKAP1 and FYN. Dephosphorylates LYN, and thereby modulates LYN activity. Interacts with CLEC10A at antigen presenting cell-T cell contact; CLEC10A on immature dendritic cells recognizes Tn antigen-carrying PTPRC/CD45 receptor on effector T cells and modulates T cell activation threshold to limit autoreactivity. The sequence is that of Receptor-type tyrosine-protein phosphatase C (Ptprc) from Rattus norvegicus (Rat).